The chain runs to 178 residues: Caveolin-1 (178 aa).

N-acetylserine is present on S2. S2 is subject to Phosphoserine. A required for homooligomerization region spans residues 2-94 (SGGKYVDSEG…WKASFTTFTV (93 aa)). The Cytoplasmic portion of the chain corresponds to 2–104 (SGGKYVDSEG…TKYWFYRLLS (103 aa)). The residue at position 5 (K5) is an N6-acetyllysine; alternate. Residue K5 forms a Glycyl lysine isopeptide (Lys-Gly) (interchain with G-Cter in ubiquitin); alternate linkage. Y6 bears the Phosphotyrosine mark. S9 carries the phosphoserine modification. At Y14 the chain carries Phosphotyrosine; by ABL1. At Y25 the chain carries Phosphotyrosine. Glycyl lysine isopeptide (Lys-Gly) (interchain with G-Cter in ubiquitin) cross-links involve residues K26, K30, K39, K47, and K57. Residues 82–94 (DGIWKASFTTFTV) are interaction with CAVIN3. Residues 105 to 125 (ALFGIPMALIWGIYFAILSFL) constitute an intramembrane region (helical). At 126–178 (HIWAVVPCIKSFLIEIQCVSRVYSIYVHTFCDPFFEAVGKIFSSIRINMQKEI) the chain is on the cytoplasmic side. The interacts with SPRY1, SPRY2, SPRY3 and SPRY4 stretch occupies residues 131-142 (VPCIKSFLIEIQ). 3 S-palmitoyl cysteine lipidation sites follow: C133, C143, and C156. Residues 149–160 (SIYVHTFCDPFF) are interacts with SPRY1, SPRY2, and SPRY4. The tract at residues 167–178 (FSSIRINMQKEI) is interacts with SPRY1, SPRY2, SPRY3 and SPRY4.

The protein belongs to the caveolin family. Homooligomer. Interacts with GLIPR2. Interacts with NOSTRIN. Interacts with SNAP25 and STX1A. Interacts (via the N-terminus) with DPP4; the interaction is direct. Interacts with CTNNB1, CDH1 and JUP. Interacts with PACSIN2; this interaction induces membrane tubulation. Interacts with SLC7A9. Interacts with BMX and BTK. Interacts with TGFBR1. Interacts with CAVIN3 (via leucine-zipper domain) in a cholesterol-sensitive manner. Interacts with CAVIN1. Interacts with EHD2 in a cholesterol-dependent manner. Forms a ternary complex with UBXN6 and VCP; mediates CAV1 targeting to lysosomes for degradation. Interacts with ABCG1; this interaction regulates ABCG1-mediated cholesterol efflux. Interacts with NEU3; this interaction enhances NEU3 sialidase activity within caveola. Interacts (via C-terminus) with SPRY1, SPRY2 (via C-terminus), SPRY3, and SPRY4. Interacts with IGFBP5; this interaction allows trafficking of IGFBP5 from the plasma membrane to the nucleus. In terms of processing, phosphorylated at Tyr-14 by ABL1 in response to oxidative stress. Ubiquitinated. Undergo monoubiquitination and multi- and/or polyubiquitination. Monoubiquitination of N-terminal lysines promotes integration in a ternary complex with UBXN6 and VCP which promotes oligomeric CAV1 targeting to lysosomes for degradation. Ubiquitinated by ZNRF1; leading to degradation and modulation of the TLR4-mediated immune response.

It localises to the golgi apparatus membrane. The protein resides in the cell membrane. The protein localises to the membrane. Its subcellular location is the caveola. It is found in the membrane raft. Functionally, may act as a scaffolding protein within caveolar membranes. Forms a stable heterooligomeric complex with CAV2 that targets to lipid rafts and drives caveolae formation. Mediates the recruitment of CAVIN proteins (CAVIN1/2/3/4) to the caveolae. Interacts directly with G-protein alpha subunits and can functionally regulate their activity. Involved in the costimulatory signal essential for T-cell receptor (TCR)-mediated T-cell activation. Its binding to DPP4 induces T-cell proliferation and NF-kappa-B activation in a T-cell receptor/CD3-dependent manner. Recruits CTNNB1 to caveolar membranes and may regulate CTNNB1-mediated signaling through the Wnt pathway. Negatively regulates TGFB1-mediated activation of SMAD2/3 by mediating the internalization of TGFBR1 from membrane rafts leading to its subsequent degradation. Binds 20(S)-hydroxycholesterol (20(S)-OHC). This is Caveolin-1 (CAV1) from Mustela putorius furo (European domestic ferret).